The following is a 1073-amino-acid chain: Activated Cdc42 kinase Ack (1073 aa).

Positions 88–110 (IGGGKQPSSKKQSSAARESSQGN) are disordered. A Protein kinase domain is found at 123–383 (ITMGLKLGDG…PTFAALKEYL (261 aa)). Residues 129-137 (LGDGSFGVV) and K156 contribute to the ATP site. The Proton acceptor role is filled by D250. The 61-residue stretch at 386 to 446 (MSPPVMRASR…PRNLLEQRKV (61 aa)) folds into the SH3 domain. Disordered stretches follow at residues 484 to 506 (QRKC…SSKQ), 803 to 834 (PLKN…VEAA), and 862 to 882 (AQPP…HQQQ). A compositionally biased stretch (low complexity) spans 812–826 (SVHSNHSSPSSTASP). Residues 1029–1072 (GLATRHYKIDQLARLGVAGRPQCEQALQQTNWSLEVAAELLLNA) form the UBA domain.

It belongs to the protein kinase superfamily. Tyr protein kinase family. As to quaternary structure, interacts with yki and ex. Interacts with drk. Likely to be a member of an axonal guidance receptor complex that includes SH3PX1, dock and Dscam. Interacts (via N-terminus) with dock. Interacts with SH3PX1 (via SH3 domain). Mg(2+) is required as a cofactor. Phosphorylated. Autophosphorylated. In terms of tissue distribution, detected in ovaries (at protein level). In adults, relatively higher expression in the head compared to the body.

The protein localises to the cytoplasm. Its subcellular location is the cytoplasmic vesicle. The protein resides in the clathrin-coated vesicle. The enzyme catalyses L-tyrosyl-[protein] + ATP = O-phospho-L-tyrosyl-[protein] + ADP + H(+). It catalyses the reaction L-threonyl-[protein] + ATP = O-phospho-L-threonyl-[protein] + ADP + H(+). Its function is as follows. Non-receptor tyrosine-protein and serine/threonine-protein kinase that is implicated in diverse biological functions such as cell survival, cell differentiation, cell growth and proliferation. Phosphorylates SH3PX1 and ex. Phosphorylates SH3PX1 predominantly on 'Tyr-56', which likely promotes the recruitment of SH3PX1 to an axonal guidance receptor complex that includes dock and Dscam; because phosphorylation of SH3PX1 increases its interaction with the complex member dock while decreasing its interaction with the actin cytoskeleton modulator WASp. In the wing and eye, promotes tissue growth, and during embryogenesis coordinates cell shape changes required for correct dorsal closure. Functions in the negative regulation of the Hippo/SWH (Sav/Wts/Hpo) signaling pathway by enhancing yki activity thereby promoting cell proliferation and inhibiting apoptosis. This is accomplished, at least in part, by phosphorylating ex thereby reducing its ability to efficiently activate the Hippo signaling cascade. In the eye disk, wing disk and possibly spermatids, inhibits programmed cell death induced by hid and rpr through a mechanism that is independent of the MAP kinase signal transduction pathway. Essential for male and female fertility. During oogenesis required for the correct temporal assembly, and consequently the catalytic activity of long Ctps filaments (cytoophidium) in the germline nurse cells, likely by phosphorylating an unidentified substrate that is essential for linking individual Ctps filaments into large, catalytically active assemblies. This Drosophila melanogaster (Fruit fly) protein is Activated Cdc42 kinase Ack.